Consider the following 1196-residue polypeptide: Tubulin-specific chaperone D (1196 aa).

HEAT repeat units lie at residues 363–401 (VIEQ…ADDV), 599–634 (YIAM…TYAL), 752–788 (SSIA…PGFL), and 1106–1142 (GDVR…VLTY).

Belongs to the TBCD family. Found in a complex with at least ARL2, PPP2CB, PPP2R1A, PPP2R2A, PPP2R5E and TBCD. Interacts with PPP2CB. Part of a supercomplex made of cofactors A to E. Cofactors A and D function by capturing and stabilizing tubulin in a quasi-native conformation. Cofactor E binds to the cofactor D-tubulin complex; interaction with cofactor C then causes the release of tubulin polypeptides that are committed to the native state. Interacts with ARL2; interaction is enhanced with the GDP-bound form of ARL2. Does not interact with ARL3, ARL4A and ARL4D. Interacts with beta tubulin. Interacts with TBCE.

It localises to the cell junction. The protein resides in the tight junction. Its subcellular location is the lateral cell membrane. The protein localises to the cytoplasm. It is found in the adherens junction. It localises to the cytoskeleton. The protein resides in the microtubule organizing center. Its subcellular location is the centrosome. Its function is as follows. Tubulin-folding protein implicated in the first step of the tubulin folding pathway and required for tubulin complex assembly. Involved in the regulation of microtubule polymerization or depolymerization, it modulates microtubule dynamics by capturing GTP-bound beta-tubulin (TUBB). Its ability to interact with beta tubulin is regulated via its interaction with ARL2. Acts as a GTPase-activating protein (GAP) for ARL2. Induces microtubule disruption in absence of ARL2. Increases degradation of beta tubulin, when overexpressed in polarized cells. Promotes epithelial cell detachment, a process antagonized by ARL2. Induces tight adherens and tight junctions disassembly at the lateral cell membrane. Required for correct assembly and maintenance of the mitotic spindle, and proper progression of mitosis. Involved in neuron morphogenesis. This Mus musculus (Mouse) protein is Tubulin-specific chaperone D (Tbcd).